We begin with the raw amino-acid sequence, 350 residues long: Kievitone hydratase (350 aa).

Residues Met-1–Ala-19 form the signal peptide.

As to quaternary structure, homodimer. In terms of processing, glycosylated.

Its subcellular location is the secreted. It carries out the reaction kievitone hydrate = kievitone + H2O. Converts fungitoxic kievitone to the less toxic kievitone hydrate, and thereby protects the pathogenic fungus against this phytoalexin. The protein is Kievitone hydratase (khs) of Fusarium solani subsp. phaseoli (Nectria haematococca).